Here is a 391-residue protein sequence, read N- to C-terminus: D-xylose 1-dehydrogenase (NADP(+)) (391 aa).

Belongs to the Gfo/Idh/MocA family.

The enzyme catalyses D-xylose + NADP(+) = D-xylono-1,5-lactone + NADPH + H(+). In terms of biological role, NADP-dependent D-xylose dehydrogenase catalyzing the oxydation of D-xylose into D-xylonolactone. Also displays some, albeit lower activity with D-glucose, D-galactose and L-arabinose as substrate. Probably not involved in D-xylose degradation, as it has been shown that H.jecorina assimilates D-xylose via D-xylose reductase and xylitol dehydrogenase, and it is unable to grow on D-xylonic acid as sole carbon source. May play a role in the regeneration of NADP(+) in the presence of D-xylose. This chain is D-xylose 1-dehydrogenase (NADP(+)), found in Hypocrea jecorina (strain ATCC 56765 / BCRC 32924 / NRRL 11460 / Rut C-30) (Trichoderma reesei).